Here is a 62-residue protein sequence, read N- to C-terminus: Sperm protamine P1 (62 aa).

The tract at residues 1–62 is disordered; the sequence is MARYRRRSRS…RYSRRGRRRY (62 aa).

The protein belongs to the protamine P1 family. As to expression, testis.

The protein localises to the nucleus. Its subcellular location is the chromosome. Its function is as follows. Protamines substitute for histones in the chromatin of sperm during the haploid phase of spermatogenesis. They compact sperm DNA into a highly condensed, stable and inactive complex. This chain is Sperm protamine P1 (PRM1), found in Sarcophilus harrisii (Tasmanian devil).